A 189-amino-acid polypeptide reads, in one-letter code: Elongation factor P (189 aa).

This sequence belongs to the elongation factor P family.

Its subcellular location is the cytoplasm. It participates in protein biosynthesis; polypeptide chain elongation. Functionally, involved in peptide bond synthesis. Stimulates efficient translation and peptide-bond synthesis on native or reconstituted 70S ribosomes in vitro. Probably functions indirectly by altering the affinity of the ribosome for aminoacyl-tRNA, thus increasing their reactivity as acceptors for peptidyl transferase. In Pseudomonas savastanoi pv. phaseolicola (strain 1448A / Race 6) (Pseudomonas syringae pv. phaseolicola (strain 1448A / Race 6)), this protein is Elongation factor P.